Here is an 837-residue protein sequence, read N- to C-terminus: Translation initiation factor IF-2 (837 aa).

Residues 94–252 (QRSPEEIEAE…NAHGFQSPTG (159 aa)) form a disordered region. Residues 96 to 136 (SPEEIEAERKRELDERRAVENAARQKAEEEARVRAEEEARR) are compositionally biased toward basic and acidic residues. The span at 137 to 171 (QPAAPSAPAEAVAAPAPVAEPVREAAPVVAAAPAA) shows a compositional bias: low complexity. Composition is skewed to basic and acidic residues over residues 172 to 213 (DTRK…EKAP) and 221 to 230 (TTDEESDGFR). The span at 231-244 (RGGRGKAKLKKRNA) shows a compositional bias: basic residues. Residues 337 to 506 (PRAPVVTVMG…LLQAEVLELT (170 aa)) form the tr-type G domain. The interval 346-353 (GHVDHGKT) is G1. 346-353 (GHVDHGKT) lines the GTP pocket. The segment at 371-375 (GITQH) is G2. Residues 392 to 395 (DTPG) form a G3 region. GTP is bound by residues 392–396 (DTPGH) and 446–449 (NKID). The interval 446-449 (NKID) is G4. Residues 482 to 484 (SAK) form a G5 region.

Belongs to the TRAFAC class translation factor GTPase superfamily. Classic translation factor GTPase family. IF-2 subfamily.

It localises to the cytoplasm. Its function is as follows. One of the essential components for the initiation of protein synthesis. Protects formylmethionyl-tRNA from spontaneous hydrolysis and promotes its binding to the 30S ribosomal subunits. Also involved in the hydrolysis of GTP during the formation of the 70S ribosomal complex. The sequence is that of Translation initiation factor IF-2 from Pseudomonas fluorescens (strain Pf0-1).